The primary structure comprises 89 residues: Small ribosomal subunit protein uS19 (89 aa).

This sequence belongs to the universal ribosomal protein uS19 family.

Functionally, protein S19 forms a complex with S13 that binds strongly to the 16S ribosomal RNA. The polypeptide is Small ribosomal subunit protein uS19 (Akkermansia muciniphila (strain ATCC BAA-835 / DSM 22959 / JCM 33894 / BCRC 81048 / CCUG 64013 / CIP 107961 / Muc)).